Here is a 776-residue protein sequence, read N- to C-terminus: Bifunctional lysine-specific demethylase and histidyl-hydroxylase NO66 (776 aa).

3 disordered regions span residues 1–57 (MGKK…EPKF), 87–126 (EQNG…AHKH), and 165–288 (ILDE…DDEG). Basic and acidic residues-rich tracts occupy residues 47–57 (HYKEPSKEPKF) and 98–119 (EISP…DGVA). Residues 166 to 204 (LDEEVEDEEIDEEEFEDEEEVEDEEGMDEDETEIDESEM) show a composition bias toward acidic residues. Over residues 206–216 (VDPKDIERCIE) the composition is skewed to basic and acidic residues. Residues 217–288 (FEDVDDEDEM…EMDADSDDEG (72 aa)) are compositionally biased toward acidic residues. Positions 425-569 (QLVNPQTFDD…NLMEKVIPEA (145 aa)) constitute a JmjC domain. Residues His-468, Asp-470, and His-535 each contribute to the Fe cation site.

It belongs to the ROX family. NO66 subfamily. Requires Fe(2+) as cofactor.

It localises to the nucleus. It carries out the reaction N(6),N(6)-dimethyl-L-lysyl(36)-[histone H3] + 2 2-oxoglutarate + 2 O2 = L-lysyl(36)-[histone H3] + 2 formaldehyde + 2 succinate + 2 CO2. In terms of biological role, oxygenase that can act as both a histone lysine demethylase and a ribosomal histidine hydroxylase. Specifically demethylates 'Lys-4' (H3K4me) and 'Lys-36' (H3K36me) of histone H3, thereby playing a central role in histone code. In Caenorhabditis briggsae, this protein is Bifunctional lysine-specific demethylase and histidyl-hydroxylase NO66 (jmjc-1).